Consider the following 896-residue polypeptide: Pentatricopeptide repeat-containing protein At5g03800 (896 aa).

PPR repeat units lie at residues 113–143 (KTRLGNALISTYLKLGFPREAILVFVSLSSP), 144–178 (TVVSYTALISGFSRLNLEIEALKVFFRMRKAGLVQ), 180–214 (NEYTFVAILTACVRVSRFSLGIQIHGLIVKSGFLN), 215–247 (SVFVSNSLMSLYDKDSGSSCDDVLKLFDEIPQR), 248–278 (DVASWNTVVSSLVKEGKSHKAFDLFYEMNRV), 284–318 (DSFTLSTLLSSCTDSSVLLRGRELHGRAIRIGLMQ), 319–349 (ELSVNNALIGFYSKFWDMKKVESLYEMMMAQ), 350–380 (DAVTFTEMITAYMSFGMVDSAVEIFANVTEK), 381–415 (NTITYNALMAGFCRNGHGLKALKLFTDMLQRGVEL), 416–450 (TDFSLTSAVDACGLVSEKKVSEQIHGFCIKFGTAF), 451–481 (NPCIQTALLDMCTRCERMADAEEMFDQWPSN), 484–519 (SSKATTSIIGGYARNGLPDKAVSLFHRTLCEQKLFL), 520–554 (DEVSLTLILAVCGTLGFREMGYQIHCYALKAGYFS), 555–585 (DISLGNSLISMYAKCCDSDDAIKIFNTMREH), 586–620 (DVISWNSLISCYILQRNGDEALALWSRMNEKEIKP), 621–653 (DIITLTLVISAFRYTESNKLSSCRDLFLSMKTI), and 659–689 (TTEHYTAFVRVLGHWGLLEEAEDTINSMPVQ). The segment at 694–769 (VLRALLDSCR…HPAKSWIIHE (76 aa)) is type E motif. The tract at residues 770–800 (NKIHSFHARDTSHPQEKDIYRGLEILIMECL) is type E(+) motif. Residues 801-896 (KVGYEPNTEY…NGKCSCRDLW (96 aa)) are type DYW motif.

This sequence belongs to the PPR family. PCMP-H subfamily.

May play a role in embryogenesis. The chain is Pentatricopeptide repeat-containing protein At5g03800 (EMB175) from Arabidopsis thaliana (Mouse-ear cress).